The sequence spans 432 residues: Glutamate-1-semialdehyde 2,1-aminomutase (432 aa).

Position 269 is an N6-(pyridoxal phosphate)lysine (lysine 269).

The protein belongs to the class-III pyridoxal-phosphate-dependent aminotransferase family. HemL subfamily. As to quaternary structure, homodimer. Pyridoxal 5'-phosphate serves as cofactor.

It is found in the cytoplasm. It carries out the reaction (S)-4-amino-5-oxopentanoate = 5-aminolevulinate. Its pathway is porphyrin-containing compound metabolism; protoporphyrin-IX biosynthesis; 5-aminolevulinate from L-glutamyl-tRNA(Glu): step 2/2. The polypeptide is Glutamate-1-semialdehyde 2,1-aminomutase (Desulforamulus reducens (strain ATCC BAA-1160 / DSM 100696 / MI-1) (Desulfotomaculum reducens)).